The primary structure comprises 118 residues: uncharacterized protein (118 aa).

The chain crosses the membrane as a helical span at residues 21–38 (IVYFFFFFGLETFFSIIN).

Its subcellular location is the membrane. This is an uncharacterized protein from Dictyostelium discoideum (Social amoeba).